The sequence spans 575 residues: V-type ATP synthase alpha chain (575 aa).

238-245 (GPFGAGKT) serves as a coordination point for ATP.

The protein belongs to the ATPase alpha/beta chains family.

The catalysed reaction is ATP + H2O + 4 H(+)(in) = ADP + phosphate + 5 H(+)(out). Its function is as follows. Produces ATP from ADP in the presence of a proton gradient across the membrane. The V-type alpha chain is a catalytic subunit. The sequence is that of V-type ATP synthase alpha chain from Borreliella burgdorferi (strain ZS7) (Borrelia burgdorferi).